We begin with the raw amino-acid sequence, 159 residues long: Single-stranded DNA-binding protein 2 (159 aa).

In terms of domain architecture, SSB spans 2–104; it reads MNRVVLVGRL…VVAESVQFLE (103 aa). Positions 106–159 are disordered; it reads RNHAEGATSNNYQNEANYSNNNKTSSYRADTSQKSDSFANEGKPIDINPDDLPF. The span at 114-127 shows a compositional bias: low complexity; sequence SNNYQNEANYSNNN. Over residues 128-143 the composition is skewed to polar residues; the sequence is KTSSYRADTSQKSDSF.

Homotetramer.

The polypeptide is Single-stranded DNA-binding protein 2 (ssb2) (Listeria innocua serovar 6a (strain ATCC BAA-680 / CLIP 11262)).